Reading from the N-terminus, the 241-residue chain is Superantigen-like protein 13 (241 aa).

Positions 1–26 (MNNNITKKIILSTTLLLLGTASTQFP) are cleaved as a signal peptide.

Belongs to the staphylococcal/streptococcal toxin family. As to quaternary structure, interacts with host FPR2; this interaction promotes neutrophil chemotaxis.

Its function is as follows. Acts as a pathogen alarming molecule by acting on host neutrophil chemotactic factors FPR2. Plays a role of chemoattractant and induces degranulation and oxidative burst in neutrophils. This is Superantigen-like protein 13 from Staphylococcus aureus (strain Newman).